We begin with the raw amino-acid sequence, 372 residues long: MNVTQQSEKEAVIKLTGISKSFDGKEVISNFDLDVNHGEFLTILGPSGCGKTTVLRMIAGFETADAGTILLDSTDVTSVPAEQRHVNTVFQSYALFPHMTVFENVAFGLRMQKVAESEIEPRVTEALQMVRLAQMANRKPHQLSGGQQQRIAIARAVVNKPKVLLLDESLSALDYKLRKQMQIELKQLQRQLGITFIFVTHDQEEALSMSDRIIVMRDGVIEQDGTPREIYEEPKNLFVARFIGEINVFAATVQERLDEKRIKAEIEDTSAIVYCDLDVAPGDKVKVLLRPEDLRLEEIKESDNKGITGYVRERTYKGMTLDSVLELDSGMRVMISEFFNEDDPDVDHSLGQKVAITWVESWEVVLADEQEV.

One can recognise an ABC transporter domain in the interval 13–243; the sequence is IKLTGISKSF…PKNLFVARFI (231 aa). Residue 45 to 52 coordinates ATP; that stretch reads GPSGCGKT.

The protein belongs to the ABC transporter superfamily. Spermidine/putrescine importer (TC 3.A.1.11.1) family. In terms of assembly, the complex is composed of two ATP-binding proteins (PotA), two transmembrane proteins (PotB and PotC) and a solute-binding protein (PotD).

It is found in the cell inner membrane. It catalyses the reaction ATP + H2O + polyamine-[polyamine-binding protein]Side 1 = ADP + phosphate + polyamineSide 2 + [polyamine-binding protein]Side 1.. Part of the ABC transporter complex PotABCD involved in spermidine/putrescine import. Responsible for energy coupling to the transport system. In Aliivibrio fischeri (strain ATCC 700601 / ES114) (Vibrio fischeri), this protein is Spermidine/putrescine import ATP-binding protein PotA.